The primary structure comprises 477 residues: tRNA-2-methylthio-N(6)-dimethylallyladenosine synthase (477 aa).

An MTTase N-terminal domain is found at 3–120 (KKLFIKTWGC…LPEMINQIKG (118 aa)). Positions 12, 49, 83, 157, 161, and 164 each coordinate [4Fe-4S] cluster. Residues 143-375 (KAEGPTAFVS…QNRITQQALR (233 aa)) enclose the Radical SAM core domain. A TRAM domain is found at 378 to 441 (RNMIDSEQRV…ANSLRGDVLR (64 aa)).

Belongs to the methylthiotransferase family. MiaB subfamily. In terms of assembly, monomer. [4Fe-4S] cluster serves as cofactor.

The protein localises to the cytoplasm. It carries out the reaction N(6)-dimethylallyladenosine(37) in tRNA + (sulfur carrier)-SH + AH2 + 2 S-adenosyl-L-methionine = 2-methylsulfanyl-N(6)-dimethylallyladenosine(37) in tRNA + (sulfur carrier)-H + 5'-deoxyadenosine + L-methionine + A + S-adenosyl-L-homocysteine + 2 H(+). Catalyzes the methylthiolation of N6-(dimethylallyl)adenosine (i(6)A), leading to the formation of 2-methylthio-N6-(dimethylallyl)adenosine (ms(2)i(6)A) at position 37 in tRNAs that read codons beginning with uridine. This Pseudoalteromonas atlantica (strain T6c / ATCC BAA-1087) protein is tRNA-2-methylthio-N(6)-dimethylallyladenosine synthase.